Consider the following 255-residue polypeptide: tRNA (guanine-N(1)-)-methyltransferase (255 aa).

Residues Gly-121 and 141 to 146 (IGDYVL) contribute to the S-adenosyl-L-methionine site. The tract at residues 236–255 (PVKAPNRAGRQKTPKNKTDG) is disordered. Positions 244 to 255 (GRQKTPKNKTDG) are enriched in basic residues.

It belongs to the RNA methyltransferase TrmD family. Homodimer.

The protein localises to the cytoplasm. The enzyme catalyses guanosine(37) in tRNA + S-adenosyl-L-methionine = N(1)-methylguanosine(37) in tRNA + S-adenosyl-L-homocysteine + H(+). Specifically methylates guanosine-37 in various tRNAs. The polypeptide is tRNA (guanine-N(1)-)-methyltransferase (Bradyrhizobium diazoefficiens (strain JCM 10833 / BCRC 13528 / IAM 13628 / NBRC 14792 / USDA 110)).